Consider the following 50-residue polypeptide: Sperm protamine P1 (50 aa).

Intrachain disulfides connect cysteine 7–cysteine 15 and cysteine 39–cysteine 47.

The protein belongs to the protamine P1 family. In terms of assembly, cross-linked by interchain disulfide bonds around the DNA-helix. As to expression, testis.

The protein localises to the nucleus. The protein resides in the chromosome. Protamines substitute for histones in the chromatin of sperm during the haploid phase of spermatogenesis. They compact sperm DNA into a highly condensed, stable and inactive complex. The chain is Sperm protamine P1 (PRM1) from Oryctolagus cuniculus (Rabbit).